Reading from the N-terminus, the 203-residue chain is Glycerol-3-phosphate acyltransferase (203 aa).

Residues 1–3 are Periplasmic-facing; sequence MSA. A helical transmembrane segment spans residues 4 to 24; the sequence is IAPGMILFAYLCGSISSAILV. Over 25–52 the chain is Cytoplasmic; the sequence is CRIAGLPDPRESGSGNPGATNVLRIGGK. Residues 53–73 form a helical membrane-spanning segment; it reads GAAVAVLIFDILKGMLPVWGA. Residues 74–80 lie on the Periplasmic side of the membrane; that stretch reads YALGVTP. The helical transmembrane segment at 81 to 101 threads the bilayer; the sequence is FWLGLIAIAACLGHIWPVFFG. Topologically, residues 102 to 111 are cytoplasmic; sequence FKGGKGVATA. The helical transmembrane segment at 112-132 threads the bilayer; sequence FGAIAPIGWDLTGVMAGTWLL. The Periplasmic segment spans residues 133-137; that stretch reads TVLLS. The chain crosses the membrane as a helical span at residues 138–158; sequence GYSSLGAIVSALIAPFYVWWF. Over 159–203 the chain is Cytoplasmic; it reads KPQFTFPVSMLSCLILLRHHDNIQRLWRRQETKIWTKLKKKRQKD.

The protein belongs to the PlsY family. Probably interacts with PlsX.

Its subcellular location is the cell inner membrane. The catalysed reaction is sn-glycerol 3-phosphate + an acyl-CoA = a 1-acyl-sn-glycero-3-phosphate + CoA. It catalyses the reaction a fatty acyl-[ACP] + sn-glycerol 3-phosphate = a 1-acyl-sn-glycero-3-phosphate + holo-[ACP]. The protein operates within lipid metabolism; phospholipid metabolism. In terms of biological role, catalyzes the transfer of an acyl group from acyl-ACP to glycerol-3-phosphate (G3P) to form lysophosphatidic acid (LPA). This enzyme can also utilize acyl-CoA as fatty acyl donor, but not acyl-PO(4). The sequence is that of Glycerol-3-phosphate acyltransferase from Salmonella agona (strain SL483).